A 150-amino-acid chain; its full sequence is Large ribosomal subunit protein uL15 (150 aa).

Positions 1–13 are enriched in basic and acidic residues; the sequence is MADNDAIKVHDLR. The interval 1–44 is disordered; sequence MADNDAIKVHDLRPAPGAKTAKTRVGRGEASKGKTAGRGTKGTK.

This sequence belongs to the universal ribosomal protein uL15 family. As to quaternary structure, part of the 50S ribosomal subunit.

In terms of biological role, binds to the 23S rRNA. In Micrococcus luteus (strain ATCC 4698 / DSM 20030 / JCM 1464 / CCM 169 / CCUG 5858 / IAM 1056 / NBRC 3333 / NCIMB 9278 / NCTC 2665 / VKM Ac-2230) (Micrococcus lysodeikticus), this protein is Large ribosomal subunit protein uL15.